We begin with the raw amino-acid sequence, 347 residues long: NADH-ubiquinone oxidoreductase chain 2 (347 aa).

10 helical membrane-spanning segments follow: residues 1 to 21, 25 to 45, 59 to 79, 96 to 116, 122 to 142, 149 to 169, 200 to 220, 239 to 259, 274 to 294, and 325 to 345; these read MNPSIFIILLTTLILGTMMVI, HWLLAWIGFEMNMMAFIPIMM, YLLTQATASALLMMAVIINLM, TLMTVALAIKLGLAPFHFWVP, IPLTTGLILLTWQKLAPLSIL, INLYLMLTMSLLSILVGGWGG, LTLLNLLIYITMTFTMFMLFI, IITTLTMLTLLSMGGLPPLSG, DILIMPTFMAITALLNLYFYM, and LLPTAIVISTMLLPLTPMLSI.

Belongs to the complex I subunit 2 family. In terms of assembly, core subunit of respiratory chain NADH dehydrogenase (Complex I) which is composed of 45 different subunits. Interacts with TMEM242.

It localises to the mitochondrion inner membrane. It carries out the reaction a ubiquinone + NADH + 5 H(+)(in) = a ubiquinol + NAD(+) + 4 H(+)(out). Its function is as follows. Core subunit of the mitochondrial membrane respiratory chain NADH dehydrogenase (Complex I) which catalyzes electron transfer from NADH through the respiratory chain, using ubiquinone as an electron acceptor. Essential for the catalytic activity and assembly of complex I. In Balaenoptera musculus (Blue whale), this protein is NADH-ubiquinone oxidoreductase chain 2.